The chain runs to 309 residues: Aspartate carbamoyltransferase catalytic subunit (309 aa).

The carbamoyl phosphate site is built by Arg-55 and Thr-56. Residue Lys-85 coordinates L-aspartate. Residues Arg-106, His-135, and Gln-138 each contribute to the carbamoyl phosphate site. Residues Arg-168 and Arg-230 each contribute to the L-aspartate site. Carbamoyl phosphate is bound by residues Leu-268 and Pro-269.

Belongs to the aspartate/ornithine carbamoyltransferase superfamily. ATCase family. Heterododecamer (2C3:3R2) of six catalytic PyrB chains organized as two trimers (C3), and six regulatory PyrI chains organized as three dimers (R2).

The enzyme catalyses carbamoyl phosphate + L-aspartate = N-carbamoyl-L-aspartate + phosphate + H(+). It participates in pyrimidine metabolism; UMP biosynthesis via de novo pathway; (S)-dihydroorotate from bicarbonate: step 2/3. Functionally, catalyzes the condensation of carbamoyl phosphate and aspartate to form carbamoyl aspartate and inorganic phosphate, the committed step in the de novo pyrimidine nucleotide biosynthesis pathway. The sequence is that of Aspartate carbamoyltransferase catalytic subunit from Aliivibrio fischeri (strain MJ11) (Vibrio fischeri).